The chain runs to 527 residues: ARS-binding protein 2 (527 aa).

Disordered stretches follow at residues 160 to 184 (PDVN…HSAS), 219 to 265 (SHHM…NSHN), and 282 to 344 (IDPD…IKRL). Positions 164–177 (SSSISTMRTSTSPS) are enriched in low complexity. Positions 225–239 (RGSQQAHQTTPQNHS) are enriched in polar residues. A compositionally biased stretch (basic and acidic residues) spans 284-303 (PDWHQWPDDLRDVSSPKESD). Phosphoserine occurs at positions 297, 298, and 302. A compositionally biased stretch (basic residues) spans 328–343 (PRKRGRPPGARNKIKR).

Its subcellular location is the nucleus. Functionally, binds, preferentially, to the Maundrell ARS consensus sequence within ARS3002. In Schizosaccharomyces pombe (strain 972 / ATCC 24843) (Fission yeast), this protein is ARS-binding protein 2 (abp2).